We begin with the raw amino-acid sequence, 558 residues long: MVSKLTSLQQELLSALLSSGVTKEVLIQALEELLPSPNFGVKLETLPLSPGSGADLDTKPVFHTLTNGHAKGRLSGDEGSEDGDDYDTPPILKELQALNTEEAAEQRAEVDRMLSEDPWRAAKMIKGYMQQHNIPQREVVDVTGLNQSHLSQHLNKGTPMKTQKRAALYTWYVRKQREILRQFNQTVQSSGNMTDKSSQDQLLFLFPEFSQQNQGPGQSEDTCSEPTNKKMRRNRFKWGPASQQILYQAYDRQKNPSKEEREALVEECNRAECLQRGVSPSKAHGLGSNLVTEVRVYNWFANRRKEEAFRQKLAMDAYSSNQTHNLNPLLTHGSPHHQPSSSPPNKMSGVRYNQPGNNEVTSSSTISHHGNSAMVTSQSVLQQVSPASLDPGHSLLSPDSKMQITVSGGGLPPVSTLTNIHSLSHHNPQQSQNLIMTPLSGVMAIAQSLNTSQAQGVPVINSVASSLAALQPVQFSQQLHSPHQQPLMQQSPGSHMAQQPFMAAVTQLQNSHMYAHKQEPPQYSHTSRFPSAMVVTDTSSINTLTSMSSSKQCPLQAW.

The segment at 1 to 31 is dimerization; the sequence is MVSKLTSLQQELLSALLSSGVTKEVLIQALE. Positions 1-32 constitute an HNF-p1 domain; that stretch reads MVSKLTSLQQELLSALLSSGVTKEVLIQALEE. Residues Ser49, Ser52, Ser75, and Ser80 each carry the phosphoserine modification. The interval 66–85 is disordered; that stretch reads TNGHAKGRLSGDEGSEDGDD. In terms of domain architecture, POU-specific atypical spans 93-188; the sequence is KELQALNTEE…ILRQFNQTVQ (96 aa). The segment at residues 231–311 is a DNA-binding region (homeobox; HNF1-type); it reads MRRNRFKWGP…NRRKEEAFRQ (81 aa). Residues 323-348 form a disordered region; sequence THNLNPLLTHGSPHHQPSSSPPNKMS.

This sequence belongs to the HNF1 homeobox family. Binds DNA as a dimer. Can form homodimer or heterodimer with HNF1-alpha. Interacts (via HNF-p1 domain) with PCBD1; the interaction increases its transactivation activity.

Its subcellular location is the nucleus. Transcription factor that binds to the inverted palindrome 5'-GTTAATNATTAAC-3'. Binds to the FPC element in the cAMP regulatory unit of the PLAU gene. Transcriptional activity is increased by coactivator PCBD1. The polypeptide is Hepatocyte nuclear factor 1-beta (Hnf1b) (Mus musculus (Mouse)).